The primary structure comprises 427 residues: MTNSLLTIGDMVQGVELPDADRQFWWDSLAPILSRMLQCSKYSVESQANILSFFKDFIVPSYGPRPSIGGEFFWKSYVTYNHTPGQVSFNFHKDKCTVRLSNVPTAPLAGTASDPFNQKGVVQTIKQIQKALPDMDITLFDYFSEAFLVADEDTVGLDARKPVPQYNQLVVASMLGYDFEPVPRVKVYFNPRWKALQMNTENHDLIWTAINNLGSPIKSYKRTLDLLQECGTPRQLGGWIFQPEFISFDLAENMSNAARLKLYGFTTKTCWSHIESIYTLDGRLNDAETQRGLAVLKRLWHLALSIPEDHDENQDLPPCPHLTAGVIYNYELRENSAKPEAKIYIPVRFYGSGDGKVIEGLVDFFKSEGWDELARSYQRDFVSVFSTPDGKMAGEHHDISFSYKNEHPYVTAYYRPELIRPMERHIV.

An L-tryptophan-binding site is contributed by 77 to 78 (YV). The substrate site is built by Arg-99, Lys-186, Tyr-188, Arg-259, Lys-261, Tyr-263, Tyr-344, Tyr-409, and Tyr-413.

The protein belongs to the tryptophan dimethylallyltransferase family.

It participates in secondary metabolite biosynthesis. In terms of biological role, indole diterpene prenyltransferase; part of the gene cluster that mediates the biosynthesis of the indole diterpenes penitrems. The geranylgeranyl diphosphate (GGPP) synthase ptmG catalyzes the first step in penitrem biosynthesis via conversion of farnesyl pyrophosphate and isopentyl pyrophosphate into geranylgeranyl pyrophosphate (GGPP). Condensation of indole-3-glycerol phosphate with GGPP by the prenyl transferase ptmC then forms 3-geranylgeranylindole (3-GGI). Epoxidation by the FAD-dependent monooxygenase ptmM leads to a epoxidized-GGI that is substrate of the terpene cyclase ptmB for cyclization to yield paspaline. Paspaline is subsequently converted to 13-desoxypaxilline by the cytochrome P450 monooxygenase ptmP, the latter being then converted to paxilline by the cytochrome P450 monooxygenase ptmQ. Paxilline is converted to beta-paxitriol via C-10 ketoreduction by the short-chain dehydrogenase ptmH which can be monoprenylated at the C-20 by the indole diterpene prenyltransferase ptmD. A two-step elimination (acetylation and elimination) process performed by the O-acetyltransferase ptmV and ptmI leads to the production of the prenylated form of penijanthine. The FAD-linked oxidoreductase ptmO then converts the prenylated form of penijanthine into PC-M5 which is in turn transformed into PC-M4 by the aromatic dimethylallyltransferase ptmE. Five sequential oxidative transformations performed by the cytochrome P450 monooxygenases ptmK, ptmU, ptmL, ptmN and ptmJ yield the various penitrem compounds. PtmK, ptmU and ptmM are involved in the formation of the key bicyclic ring of penitrem C via the formation of the intermediates secopenitrem D and penitrem D. PtmL catalyzes the epoxidation of penitrem D and C to yield penitrem B and F, respectively. PtmJ catalyzes the last benzylic hydroxylation to convert penitrem B to prenitrem E and penitrem F to penitrem A. This is Indole diterpene prenyltransferase ptmD from Penicillium ochrochloron.